We begin with the raw amino-acid sequence, 498 residues long: Minor fimbrium subunit Mfa1 (498 aa).

The signal sequence occupies residues 1 to 19 (MKLNKMFLVGALLSLGFAS). Cys-20 is lipidated: N-palmitoyl cysteine. Residue Cys-20 is the site of S-diacylglycerol cysteine attachment. The propeptide occupies 20-50 (CSKEGNGPAPDSSSTADTHMSVSMSLPQHNR). The segment at 436–476 (SGNPFVPTDPDPNNPDTPDNPDTPDPEDPDTPNPEEPLPVQ) is disordered.

It belongs to the bacteroidetes fimbrillin superfamily. FimA/Mfa1 family. In terms of assembly, structural component of the fimbrial stalk. Minor fimbriae are composed of a structural subunit, such as the 53 kDa fimbrillin, and the accessory subunits Mfa3, Mfa4 and Mfa5. Fimbrium assembly occurs by linear, head-to-tail oligomerization of fimbrial subunits. This is mediated via insertion of a C-terminal beta-strand from one subunit into a groove in the N-terminal domain of the following subunit.

The protein resides in the fimbrium. It is found in the cell outer membrane. Functionally, structural subunit of the minor fimbriae. These filamentous pili are attached to the cell surface; they mediate biofilm formation, adhesion onto host cells and onto other bacteria that are part of the oral microbiome. They play an important role in invasion of periodontal tissues and are recognized as major virulence factors. Mfa1 orthologs from different strains have highly divergent sequences, and this correlates with pathogenicity. This chain is Minor fimbrium subunit Mfa1, found in Porphyromonas gingivalis (Bacteroides gingivalis).